The chain runs to 408 residues: MSAATPPTERRVSARVGAISESATLAVDAKAKALKAAGRPVIGFGAGEPDFPTPDYIVQAAIEACSNPKYHRYTPAGGLPELKAAIAAKTLRDSGYEVDASQVLVTNGGKQAIYEAFAAILDPGDEVIVPAPYWTTYPESIRLAGGVPVDVVADETTGYRVSVEQLEAARTENTKVLLFVSPSNPTGAVYTREQIEEIGRWAAEKGLWVLTDEIYEHLVYGDAEFHSLPVVVPELADKCIVVNGVAKTYAMTGWRVGWVIGPKDVIKAATNLQSHATSNVSNVAQVAALAAVSGDLTAVAEMREAFDRRRKTIVRMLNEIGGVLCPEPEGAFYAYPSVKALLGKEIRGKRPQDTVELAALILEEAEVAVVPGEAFGTPGYLRLSYALGDEDLVEGVSRIQKLLSEAKD.

Positions 45, 134, and 184 each coordinate L-aspartate. The residue at position 247 (Lys247) is an N6-(pyridoxal phosphate)lysine. Arg382 contacts L-aspartate.

Belongs to the class-I pyridoxal-phosphate-dependent aminotransferase family. As to quaternary structure, homodimer. Pyridoxal 5'-phosphate is required as a cofactor.

It localises to the cytoplasm. The enzyme catalyses L-aspartate + 2-oxoglutarate = oxaloacetate + L-glutamate. Functionally, catalyzes the reversible conversion of aspartate and 2-oxoglutarate to glutamate and oxaloacetate. Does not have prephenate aminotransferase activity. This Streptomyces avermitilis (strain ATCC 31267 / DSM 46492 / JCM 5070 / NBRC 14893 / NCIMB 12804 / NRRL 8165 / MA-4680) protein is Aspartate aminotransferase.